We begin with the raw amino-acid sequence, 102 residues long: Small ribosomal subunit protein uS10 (102 aa).

The protein belongs to the universal ribosomal protein uS10 family. As to quaternary structure, part of the 30S ribosomal subunit.

Its function is as follows. Involved in the binding of tRNA to the ribosomes. This is Small ribosomal subunit protein uS10 (rpsJ) from Bacillus subtilis (strain 168).